The sequence spans 50 residues: ATP synthase protein 8 (50 aa).

The helical transmembrane segment at Ile-13–Leu-32 threads the bilayer.

This sequence belongs to the ATPase protein 8 family. F-type ATPases have 2 components, CF(1) - the catalytic core - and CF(0) - the membrane proton channel.

Its subcellular location is the mitochondrion membrane. In terms of biological role, mitochondrial membrane ATP synthase (F(1)F(0) ATP synthase or Complex V) produces ATP from ADP in the presence of a proton gradient across the membrane which is generated by electron transport complexes of the respiratory chain. F-type ATPases consist of two structural domains, F(1) - containing the extramembraneous catalytic core and F(0) - containing the membrane proton channel, linked together by a central stalk and a peripheral stalk. During catalysis, ATP synthesis in the catalytic domain of F(1) is coupled via a rotary mechanism of the central stalk subunits to proton translocation. Part of the complex F(0) domain. Minor subunit located with subunit a in the membrane. The chain is ATP synthase protein 8 (ATP8) from Podospora anserina (strain S / ATCC MYA-4624 / DSM 980 / FGSC 10383) (Pleurage anserina).